Reading from the N-terminus, the 165-residue chain is Endoribonuclease YbeY (165 aa).

Residues histidine 130, histidine 134, and histidine 140 each contribute to the Zn(2+) site.

This sequence belongs to the endoribonuclease YbeY family. Requires Zn(2+) as cofactor.

The protein resides in the cytoplasm. Functionally, single strand-specific metallo-endoribonuclease involved in late-stage 70S ribosome quality control and in maturation of the 3' terminus of the 16S rRNA. The polypeptide is Endoribonuclease YbeY (Streptococcus pneumoniae serotype 4 (strain ATCC BAA-334 / TIGR4)).